We begin with the raw amino-acid sequence, 409 residues long: Argininosuccinate synthase (409 aa).

9–17 (AYSGGLDTS) is an ATP binding site. L-citrulline is bound at residue Tyr-86. Gly-116 contacts ATP. Positions 118, 122, and 123 each coordinate L-aspartate. Asn-122 serves as a coordination point for L-citrulline. L-citrulline is bound by residues Arg-126, Ser-174, Ser-183, Glu-259, and Tyr-271.

It belongs to the argininosuccinate synthase family. Type 1 subfamily. Homotetramer.

It localises to the cytoplasm. The enzyme catalyses L-citrulline + L-aspartate + ATP = 2-(N(omega)-L-arginino)succinate + AMP + diphosphate + H(+). Its pathway is amino-acid biosynthesis; L-arginine biosynthesis; L-arginine from L-ornithine and carbamoyl phosphate: step 2/3. In Halalkalibacterium halodurans (strain ATCC BAA-125 / DSM 18197 / FERM 7344 / JCM 9153 / C-125) (Bacillus halodurans), this protein is Argininosuccinate synthase.